Consider the following 130-residue polypeptide: MRQMNKTGIAHIYASQNNTIIHVTDPTGAETIAMVSGGMVVKNDRDQASPYAAMKAADMVSEALKEKEITDLIIKVRAPGGNKSKIPGPGAQAAIRALSRAGLKIVRIEEVTPIPHDGTKKKGGKRGRRV.

It belongs to the universal ribosomal protein uS11 family. As to quaternary structure, part of the 30S ribosomal subunit.

Located on the platform of the 30S subunit. In Thermoplasma acidophilum (strain ATCC 25905 / DSM 1728 / JCM 9062 / NBRC 15155 / AMRC-C165), this protein is Small ribosomal subunit protein uS11.